A 501-amino-acid polypeptide reads, in one-letter code: Bifunctional purine biosynthesis protein PurH (501 aa).

The region spanning 1–144 (MKKRALISVF…KNFKDVVVLS (144 aa)) is the MGS-like domain.

The protein belongs to the PurH family.

The catalysed reaction is (6R)-10-formyltetrahydrofolate + 5-amino-1-(5-phospho-beta-D-ribosyl)imidazole-4-carboxamide = 5-formamido-1-(5-phospho-D-ribosyl)imidazole-4-carboxamide + (6S)-5,6,7,8-tetrahydrofolate. It catalyses the reaction IMP + H2O = 5-formamido-1-(5-phospho-D-ribosyl)imidazole-4-carboxamide. It participates in purine metabolism; IMP biosynthesis via de novo pathway; 5-formamido-1-(5-phospho-D-ribosyl)imidazole-4-carboxamide from 5-amino-1-(5-phospho-D-ribosyl)imidazole-4-carboxamide (10-formyl THF route): step 1/1. Its pathway is purine metabolism; IMP biosynthesis via de novo pathway; IMP from 5-formamido-1-(5-phospho-D-ribosyl)imidazole-4-carboxamide: step 1/1. The protein is Bifunctional purine biosynthesis protein PurH of Clostridium perfringens (strain 13 / Type A).